A 661-amino-acid chain; its full sequence is Acyl-coenzyme A oxidase acox-1.2 (661 aa).

FAD is bound by residues 147–150 (YAQT), 155–156 (GS), and Gly189. Substrate is bound by residues 283–286 (KIGY) and Arg293. FAD-binding positions include Arg318 and 338 to 341 (QQHR). ATP-binding residues include His340, Ser390, His394, and Gln402. Gly409 is an FAD binding site. 431–432 (YE) provides a ligand contact to substrate. Glu432 serves as the catalytic Proton acceptor. Residue Glu434 participates in FAD binding. ATP-binding positions include 525 to 528 (RASR) and Tyr573. Positions 659–661 (AKL) match the Microbody targeting signal motif.

The protein belongs to the acyl-CoA oxidase family. In terms of assembly, homodimer. Forms a heterodimer with acox-1.1. FAD serves as cofactor.

It localises to the peroxisome. The enzyme catalyses asc-omegaC5-CoA + O2 = asc-omegaDeltaC5-CoA + H2O2. Its pathway is lipid metabolism; peroxisomal fatty acid beta-oxidation. Activated by ATP. ATP binding leads to a conformational change that promotes FAD cofactor binding and enzyme activity. ATP binding likely occurs during acox-1.2 folding and/or dimer formation. The preference for processing substrates with shorter fatty acid chains is likely due to the closed conformation of the active site. Its function is as follows. Involved in the first step of peroxisomal beta-oxidation by catalyzing the desaturation of fatty acid-derived side chains of ascaroside pheromones, which regulates development and behavior. Specifically, shortens ascarosides with 5-carbon omega side chain (asc-omega-C5). Does not shorten indol-3-carbonyl(IC)-ascaroside with 7-carbon or 9-carbon side chains. Does not catalyze the desaturation of fatty acids or hydroxylated fatty acids. This Caenorhabditis elegans protein is Acyl-coenzyme A oxidase acox-1.2.